The sequence spans 211 residues: MSIADIRTDYTQAKLSELDTDPDPVAQFAKWFGEALRAEVPEPNAMSVSTVAANGRPSSRILLIKDFDQRGFTWFTNYESRKGQELAQNPHAALLFHWIPLEREVRIEGRVERVSSAESEQYFQSRPVKSRLSALASSQSHPVADRTALEAQYAKVEAQYGEHPPRPEHWGGYRLKPDYIEFWQGRASRLHDRIVYSLDKEGKWQRHRLQP.

Substrate contacts are provided by residues 7–10 (RTDY) and lysine 65. FMN is bound by residues 60–65 (RILLIK), 75–76 (FT), arginine 81, and lysine 82. Substrate-binding residues include tyrosine 122, arginine 126, and serine 130. Residues 139-140 (QS) and tryptophan 183 each bind FMN. A substrate-binding site is contributed by 189-191 (RLH). Arginine 193 is a binding site for FMN.

It belongs to the pyridoxamine 5'-phosphate oxidase family. As to quaternary structure, homodimer. FMN is required as a cofactor.

The catalysed reaction is pyridoxamine 5'-phosphate + O2 + H2O = pyridoxal 5'-phosphate + H2O2 + NH4(+). The enzyme catalyses pyridoxine 5'-phosphate + O2 = pyridoxal 5'-phosphate + H2O2. It participates in cofactor metabolism; pyridoxal 5'-phosphate salvage; pyridoxal 5'-phosphate from pyridoxamine 5'-phosphate: step 1/1. The protein operates within cofactor metabolism; pyridoxal 5'-phosphate salvage; pyridoxal 5'-phosphate from pyridoxine 5'-phosphate: step 1/1. Its function is as follows. Catalyzes the oxidation of either pyridoxine 5'-phosphate (PNP) or pyridoxamine 5'-phosphate (PMP) into pyridoxal 5'-phosphate (PLP). The polypeptide is Pyridoxine/pyridoxamine 5'-phosphate oxidase (Janthinobacterium sp. (strain Marseille) (Minibacterium massiliensis)).